Reading from the N-terminus, the 419-residue chain is Ribosomal RNA large subunit methyltransferase G (419 aa).

A compositionally biased stretch (basic and acidic residues) spans 386–408; it reads KAEPFETHPTEAEAKVEVTESKP. The interval 386–419 is disordered; that stretch reads KAEPFETHPTEAEAKVEVTESKPHPQSSLYGTKK. Polar residues predominate over residues 409–419; the sequence is HPQSSLYGTKK.

The protein belongs to the methyltransferase superfamily. RlmG family.

The protein localises to the cytoplasm. It catalyses the reaction guanosine(1835) in 23S rRNA + S-adenosyl-L-methionine = N(2)-methylguanosine(1835) in 23S rRNA + S-adenosyl-L-homocysteine + H(+). In terms of biological role, specifically methylates the guanine in position 1835 (m2G1835) of 23S rRNA. This chain is Ribosomal RNA large subunit methyltransferase G, found in Shewanella woodyi (strain ATCC 51908 / MS32).